Here is a 178-residue protein sequence, read N- to C-terminus: Large ribosomal subunit protein uL16 (178 aa).

Belongs to the universal ribosomal protein uL16 family.

This is Large ribosomal subunit protein uL16 from Saccharolobus solfataricus (strain ATCC 35092 / DSM 1617 / JCM 11322 / P2) (Sulfolobus solfataricus).